Here is a 200-residue protein sequence, read N- to C-terminus: 2-phospho-L-lactate guanylyltransferase (200 aa).

This sequence belongs to the CofC family. As to quaternary structure, homodimer.

It catalyses the reaction (2S)-2-phospholactate + GTP + H(+) = (2S)-lactyl-2-diphospho-5'-guanosine + diphosphate. It participates in cofactor biosynthesis; coenzyme F420 biosynthesis. Guanylyltransferase that catalyzes the activation of (2S)-2-phospholactate (2-PL) as (2S)-lactyl-2-diphospho-5'-guanosine, via the condensation of 2-PL with GTP. It is involved in the biosynthesis of coenzyme F420, a hydride carrier cofactor. This Ferroglobus placidus (strain DSM 10642 / AEDII12DO) protein is 2-phospho-L-lactate guanylyltransferase.